A 245-amino-acid chain; its full sequence is MGRLDGKVIVLTAAAQGIGRAAALAFAKEGAKVIATDINDSKLQELDKYPGIHTRVLDVTKKKQIDQFANDIERLDVLFNVAGFVHHGTILDCEETDWDFSMNLNVRSMYLMIKAFLPKMMAQKSGNIINMSSVASSIKGVVNRCVYSTTKAAVIGLTKSVAADFIQQGIRCNCVCPGTVDTPSLQERIQARPNPEEALSDFLKRQKTGRFATAEEVALLCVYLASDESAYITGNPVIIDGGWSL.

NAD(+) contacts are provided by residues 16–18 (QGI), D37, and D58. Position 144 (R144) interacts with substrate. Y147 (proton acceptor) is an active-site residue. Residues K151 and 180–184 (VDTPS) contribute to the NAD(+) site. The substrate site is built by R188 and R205.

The protein belongs to the short-chain dehydrogenases/reductases (SDR) family. As to quaternary structure, homotetramer.

It is found in the cytoplasm. It carries out the reaction cis-4-hydroxy-L-proline + NAD(+) = 4-oxo-L-proline + NADH + H(+). The enzyme catalyses (R)-3-hydroxybutanoate + NAD(+) = acetoacetate + NADH + H(+). Its pathway is amino-acid metabolism. The protein operates within siderophore biosynthesis. Its function is as follows. NAD(H)-dependent dehydrogenase/reductase with a preference for cyclic substrates. Catalyzes stereoselective conversion of 4-oxo-L-proline to cis-4-hydroxy-L-proline, likely a detoxification mechanism for ketoprolines. Mediates the formation of 2,5-dihydroxybenzoate (2,5-DHBA), a siderophore that chelates free cytoplasmic iron and associates with LCN2, thereby regulating iron transport and homeostasis while protecting cells against free radical-induced oxidative stress. The iron-siderophore complex is imported into mitochondria, providing an iron source for mitochondrial metabolic processes in particular heme synthesis. May act as a 3-hydroxybutyrate dehydrogenase. This is Dehydrogenase/reductase SDR family member 6 (BDH2) from Bos taurus (Bovine).